The primary structure comprises 284 residues: Probable endonuclease 4 (284 aa).

Residues histidine 69, histidine 109, glutamate 145, aspartate 179, histidine 182, histidine 216, aspartate 229, histidine 231, and glutamate 261 each contribute to the Zn(2+) site.

Belongs to the AP endonuclease 2 family. It depends on Zn(2+) as a cofactor.

It catalyses the reaction Endonucleolytic cleavage to 5'-phosphooligonucleotide end-products.. Its function is as follows. Endonuclease IV plays a role in DNA repair. It cleaves phosphodiester bonds at apurinic or apyrimidinic (AP) sites, generating a 3'-hydroxyl group and a 5'-terminal sugar phosphate. The polypeptide is Probable endonuclease 4 (Klebsiella pneumoniae (strain 342)).